A 75-amino-acid chain; its full sequence is Protein myomixer (75 aa).

The Cytoplasmic segment spans residues 1-5; the sequence is MPAVF. Residues 6–28 form a helical membrane-spanning segment; that stretch reads LLLRSLVVRLFGSRLAASGVQLL. The Extracellular segment spans residues 29–75; the sequence is RRILTTATGHLGTVLRNIWERISSQQSKEAILGCVLCLLNMHKKVDN. The short motif at 58–67 is the AxLyCxL element; the sequence is AILGCVLCLL.

The protein belongs to the MYMX family. As to expression, specifically expressed in the developing myotome.

It localises to the cell membrane. Functionally, myoblast-specific protein that mediates myoblast fusion, an essential step for the formation of multi-nucleated muscle fibers. Involved in membrane fusion downstream of the lipid mixing step mediated by mymk. Acts by generating membrane stresses via its extracellular C-terminus, leading to drive fusion pore formation. The sequence is that of Protein myomixer from Danio rerio (Zebrafish).